The chain runs to 124 residues: Large ribosomal subunit protein uL22c (124 aa).

This sequence belongs to the universal ribosomal protein uL22 family. In terms of assembly, part of the 50S ribosomal subunit.

It is found in the plastid. It localises to the chloroplast. Functionally, this protein binds specifically to 23S rRNA. Its function is as follows. The globular domain of the protein is located near the polypeptide exit tunnel on the outside of the subunit, while an extended beta-hairpin is found that lines the wall of the exit tunnel in the center of the 70S ribosome. This Amborella trichopoda protein is Large ribosomal subunit protein uL22c (rpl22).